Consider the following 733-residue polypeptide: Catalase-peroxidase 2 (733 aa).

The tract at residues 1–35 is disordered; the sequence is MAEAETHPPIGESQTEPAESGCPMRIKPPVEGGSN. Residues 106–234 constitute a cross-link (tryptophyl-tyrosyl-methioninium (Trp-Tyr) (with M-260)); sequence WHAAGTYRVE…PXXPHMGLIY (129 aa). His-107 acts as the Proton acceptor in catalysis. Positions 234–260 form a cross-link, tryptophyl-tyrosyl-methioninium (Tyr-Met) (with W-106); that stretch reads YVNPEGPEGNPDYLAAAIDIRETFGRM. Residue His-275 coordinates heme.

This sequence belongs to the peroxidase family. Peroxidase/catalase subfamily. As to quaternary structure, homodimer or homotetramer. Requires heme b as cofactor. Formation of the three residue Trp-Tyr-Met cross-link is important for the catalase, but not the peroxidase activity of the enzyme.

The enzyme catalyses H2O2 + AH2 = A + 2 H2O. It carries out the reaction 2 H2O2 = O2 + 2 H2O. Bifunctional enzyme with both catalase and broad-spectrum peroxidase activity. May play a role in the intracellular survival of mycobacteria. The polypeptide is Catalase-peroxidase 2 (Mycolicibacterium fortuitum (Mycobacterium fortuitum)).